The chain runs to 350 residues: Phosphotriesterase-related protein (350 aa).

A divalent metal cation contacts are provided by His-22, His-24, Glu-169, His-201, His-230, and Asp-298.

Belongs to the metallo-dependent hydrolases superfamily. Phosphotriesterase family. The cofactor is a divalent metal cation.

The protein is Phosphotriesterase-related protein of Drosophila persimilis (Fruit fly).